Consider the following 749-residue polypeptide: Protein lin-54 homolog (749 aa).

A Glycyl lysine isopeptide (Lys-Gly) (interchain with G-Cter in SUMO2) cross-link involves residue Lys139. N6-acetyllysine occurs at positions 244 and 249. Ser264, Ser282, Ser310, and Ser314 each carry phosphoserine. A Glycyl lysine isopeptide (Lys-Gly) (interchain with G-Cter in SUMO2) cross-link involves residue Lys357. The interval 369-388 is disordered; the sequence is ASSSTQPVSQNPSTNTQPLQ. A CRC domain is found at 521-634; that stretch reads PRKPCNCTKS…KCIGCKNFEE (114 aa). The interval 523-536 is DNA-binding; it reads KPCNCTKSLCLKLY. Residues Cys525, Cys527, Cys532, Cys537, Cys539, Cys546, Cys549, Cys551, and Cys554 each coordinate Zn(2+). A linker region spans residues 583 to 596; sequence IGKGKEGESDRRHS. The Zn(2+) site is built by Cys599, Cys601, Cys606, Cys611, Cys613, Cys620, Cys624, Cys626, and Cys629. The interval 599–612 is DNA-binding; it reads CNCKRSGCLKNYCE. Ser635 is modified (phosphoserine). Residues Lys639, Lys659, and Lys661 each participate in a glycyl lysine isopeptide (Lys-Gly) (interchain with G-Cter in SUMO2) cross-link.

It belongs to the lin-54 family. In terms of assembly, component of the DREAM complex (also named LINC complex) at least composed of E2F4, E2F5, LIN9, LIN37, LIN52, LIN54, MYBL1, MYBL2, RBL1, RBL2, RBBP4, TFDP1 and TFDP2. The complex exists in quiescent cells where it represses cell cycle-dependent genes. It dissociates in S phase when LIN9, LIN37, LIN52 and LIN54 form a subcomplex that binds to MYBL2.

The protein resides in the nucleus. Its function is as follows. Component of the DREAM complex, a multiprotein complex that can both act as a transcription activator or repressor depending on the context. In G0 phase, the complex binds to more than 800 promoters and is required for repression of E2F target genes. In S phase, the complex selectively binds to the promoters of G2/M genes whose products are required for mitosis and participates in their cell cycle dependent activation. In the complex, acts as a DNA-binding protein that binds the promoter of CDK1 in a sequence-specific manner. Specifically recognizes the consensus motif 5'-TTYRAA-3' in target DNA. The protein is Protein lin-54 homolog (LIN54) of Homo sapiens (Human).